A 163-amino-acid chain; its full sequence is Putative ribose 5-phosphate isomerase (163 aa).

D-ribulose 5-phosphate is bound at residue 16-17; sequence DD. Residue Cys-76 is the Proton acceptor of the active site. D-ribulose 5-phosphate contacts are provided by residues 77–81, Asn-110, Arg-120, and Lys-148; that span reads GTGLG.

Belongs to the LacAB/RpiB family. As to quaternary structure, homodimer or homotetramer.

This chain is Putative ribose 5-phosphate isomerase, found in Coccidioides immitis (strain RS) (Valley fever fungus).